Consider the following 322-residue polypeptide: DNA repair and recombination protein RadA (322 aa).

105–112 lines the ATP pocket; the sequence is GMYGSGKT.

This sequence belongs to the eukaryotic RecA-like protein family.

Its function is as follows. Involved in DNA repair and in homologous recombination. Binds and assemble on single-stranded DNA to form a nucleoprotein filament. Hydrolyzes ATP in a ssDNA-dependent manner and promotes DNA strand exchange between homologous DNA molecules. The polypeptide is DNA repair and recombination protein RadA (Methanococcus maripaludis (strain C7 / ATCC BAA-1331)).